A 224-amino-acid polypeptide reads, in one-letter code: Urease accessory protein UreF (224 aa).

It belongs to the UreF family. As to quaternary structure, ureD, UreF and UreG form a complex that acts as a GTP-hydrolysis-dependent molecular chaperone, activating the urease apoprotein by helping to assemble the nickel containing metallocenter of UreC. The UreE protein probably delivers the nickel.

The protein resides in the cytoplasm. In terms of biological role, required for maturation of urease via the functional incorporation of the urease nickel metallocenter. The chain is Urease accessory protein UreF from Enterobacter sp. (strain 638).